Here is a 32-residue protein sequence, read N- to C-terminus: Periplasmic [NiFeSe] hydrogenase small subunit (32 aa).

[4Fe-4S] cluster contacts are provided by cysteine 18 and cysteine 21.

This sequence belongs to the [NiFe]/[NiFeSe] hydrogenase small subunit family. As to quaternary structure, heterodimer of a large and a small subunit. The cofactor is [3Fe-4S] cluster. Requires [4Fe-4S] cluster as cofactor.

The protein localises to the periplasm. It catalyses the reaction H2 + A = AH2. The chain is Periplasmic [NiFeSe] hydrogenase small subunit from Desulfomicrobium norvegicum (strain DSM 1741 / NCIMB 8310) (Desulfovibrio baculatus (strain Norway 4)).